The chain runs to 281 residues: Pantothenate synthetase (281 aa).

ATP is bound at residue 30–37 (MGNLHQGH). The active-site Proton donor is the H37. Q61 contacts (R)-pantoate. A beta-alanine-binding site is contributed by Q61. 148–151 (GQKD) serves as a coordination point for ATP. Q154 is a (R)-pantoate binding site. Residues A177 and 185–188 (LSSR) each bind ATP.

The protein belongs to the pantothenate synthetase family. Homodimer.

The protein localises to the cytoplasm. The catalysed reaction is (R)-pantoate + beta-alanine + ATP = (R)-pantothenate + AMP + diphosphate + H(+). It participates in cofactor biosynthesis; (R)-pantothenate biosynthesis; (R)-pantothenate from (R)-pantoate and beta-alanine: step 1/1. In terms of biological role, catalyzes the condensation of pantoate with beta-alanine in an ATP-dependent reaction via a pantoyl-adenylate intermediate. In Acinetobacter baylyi (strain ATCC 33305 / BD413 / ADP1), this protein is Pantothenate synthetase.